The primary structure comprises 519 residues: MEGVLYKWTNYLSGWQPRWFLLCGGILSYYDSPEDAWKGCKGSIQMAVCEIQVHSVDNTRMDLIIPGEQYFYLKARSVAERQRWLVALGSAKACLTDSRTQKEKEFAENTENLKTKMSELRLYCDLLVQQVDKTKEVATAGVTDSEEGIDVGTLLKSTCNTFLKTLEECMQIANAAFTSELLYHTPPGSPQLAVLKSSKMKHPIIPIHNSLERSMELNSCENGSLSIEVNGDEEILMKTKSSLYLKSTEVDCSISSEENTDDNVTVQGEIMKEDGEENLESHDKDPAQPGSDSVCSPESPWEDNEEVIPTFFSTMNTSFSDIELLEDSGIPTEAFLASCYAVVPVLDKLGPTVFAPVKMDLVGNIKKVNQKYITNKEEFTTLQKIVLHEVEADVAQVRNSATEALLWLKRGLKFLKGFLTEVKNGEKDIQTALNNAYGKTLRQHHGWVVRGVFALALRAAPSYEDFVAALTIKEGDHQKEAFSAGMQRDLSLYLPAMEKQLAILDTLYEIHGLESDEVV.

The 93-residue stretch at 1-93 (MEGVLYKWTN…WLVALGSAKA (93 aa)) folds into the PH domain. Position 139 is a phosphothreonine (Thr139). Ser145 bears the Phosphoserine mark. Thr153 bears the Phosphothreonine mark. Residues 275 to 302 (GEENLESHDKDPAQPGSDSVCSPESPWE) are disordered. Residues 330-473 (IPTEAFLASC…EDFVAALTIK (144 aa)) are glycolipid transfer protein homology domain.

As to quaternary structure, homodimer. Interacts with ARF1; the interaction together with phosphatidylinositol 4-phosphate binding is required for FAPP2 GlcCer transfer ability.

It localises to the golgi apparatus. The protein resides in the trans-Golgi network membrane. It is found in the membrane. Cargo transport protein that is required for apical transport from the trans-Golgi network (TGN). Transports AQP2 from the trans-Golgi network (TGN) to sites of AQP2 phosphorylation. Mediates the non-vesicular transport of glucosylceramide (GlcCer) from the trans-Golgi network (TGN) to the plasma membrane and plays a pivotal role in the synthesis of complex glycosphingolipids. Binding of both phosphatidylinositol 4-phosphate (PIP) and ARF1 are essential for the GlcCer transfer ability. Also required for primary cilium formation, possibly by being involved in the transport of raft lipids to the apical membrane, and for membrane tubulation. This chain is Pleckstrin homology domain-containing family A member 8 (Plekha8), found in Mus musculus (Mouse).